The sequence spans 423 residues: MFIDTARIYIKAGDGGNGIISFRREKYVAYGGPDGGDGGKGGDVIFIADPNLSTLLDFKYRKKYIAQNGENGRGKNQYGKNGEDLYIKVPVGTLIINDETGEIIADLVKPNQKAIVLRGGKGGRGNAKFATPTLKTPRFAESGEKGKEMWVRLELKLLADVGLIGFPNAGKSTLLASCTRAKPKIANYPFTTLTPNLGVVEHKGKSFVMADIPGLIEGAHRGEGLGHDFLRHIERTKMLIHVVDVSASEGRDPIEDFEKINEELKLYSERLLTLSQIVAANKIDIQSGKENFPAFEKEIKKRGYEVYPISALTKVGIDKLLDKTIEILSSIPVEEIKEVPEVIVYTPPEEEETLNIEVKDNTYYLSGTKIDKLLKRVNLQDEHSLRYFEMLLRKSGVIDALKEKGFKSGDTINVRDFEFEYYE.

One can recognise an Obg domain in the interval 1-158; the sequence is MFIDTARIYI…MWVRLELKLL (158 aa). Positions 159–329 constitute an OBG-type G domain; sequence ADVGLIGFPN…LLDKTIEILS (171 aa). GTP-binding positions include 165-172, 190-194, 211-214, 281-284, and 310-312; these read GFPNAGKS, FTTLT, DIPG, NKID, and SAL. Mg(2+)-binding residues include S172 and T192. Residues 346–423 enclose the OCT domain; it reads TPPEEEETLN…VRDFEFEYYE (78 aa).

The protein belongs to the TRAFAC class OBG-HflX-like GTPase superfamily. OBG GTPase family. In terms of assembly, monomer. It depends on Mg(2+) as a cofactor.

It localises to the cytoplasm. An essential GTPase which binds GTP, GDP and possibly (p)ppGpp with moderate affinity, with high nucleotide exchange rates and a fairly low GTP hydrolysis rate. Plays a role in control of the cell cycle, stress response, ribosome biogenesis and in those bacteria that undergo differentiation, in morphogenesis control. The chain is GTPase Obg from Thermoanaerobacter pseudethanolicus (strain ATCC 33223 / 39E) (Clostridium thermohydrosulfuricum).